A 122-amino-acid chain; its full sequence is uncharacterized protein (122 aa).

The N-terminal stretch at 1-18 (MYSMAFLASSGLVANSSA) is a signal peptide. A glycan (N-linked (GlcNAc...) asparagine) is linked at asparagine 15.

This is an uncharacterized protein from Saccharomyces cerevisiae (strain ATCC 204508 / S288c) (Baker's yeast).